The chain runs to 241 residues: Probable transcriptional regulatory protein H16_A0916 (241 aa).

This sequence belongs to the TACO1 family.

The protein resides in the cytoplasm. The protein is Probable transcriptional regulatory protein H16_A0916 of Cupriavidus necator (strain ATCC 17699 / DSM 428 / KCTC 22496 / NCIMB 10442 / H16 / Stanier 337) (Ralstonia eutropha).